We begin with the raw amino-acid sequence, 284 residues long: MESLSEVSVQFSQLSMFPFFDMAHYLASVMSAREQAGALDIASHSPMASWFSAMLHCFGGGILSSILLAEPPVGILANTTNIMLASAIWYMVYYFPYDLFYNCFFFLPIRLIAAGMKEVTRTWKILSGITHAHSHYKDAWLVMITIGWARGAGGGLISNFEQLVRGVWKPESNEFLKMSYPVKVTLIGAVLFTLQHGHYLPISRHNLMFIYTMFLVSIKVTMMLTHSAGSPFLPLETPLHRILFGLRQNQAEVRESPSSSGAKGKPSKKTLDKDSGEQSNKKDK.

The Lumenal segment spans residues 1-15 (MESLSEVSVQFSQLS). Residues 16 to 32 (MFPFFDMAHYLASVMSA) traverse the membrane as a helical segment. The Cytoplasmic segment spans residues 33–44 (REQAGALDIASH). Residues 45–68 (SPMASWFSAMLHCFGGGILSSILL) traverse the membrane as a helical segment. The Lumenal segment spans residues 69-79 (AEPPVGILANT). Residues 80–99 (TNIMLASAIWYMVYYFPYDL) traverse the membrane as a helical segment. The Cytoplasmic segment spans residues 100-102 (FYN). A helical membrane pass occupies residues 103–121 (CFFFLPIRLIAAGMKEVTR). Residues lysine 117 and arginine 121 each coordinate a 1,2-diacyl-sn-glycero-3-phospho-(1D-myo-inositol-4,5-bisphosphate). At 122 to 139 (TWKILSGITHAHSHYKDA) the chain is on the lumenal side. The helical transmembrane segment at 140-157 (WLVMITIGWARGAGGGLI) threads the bilayer. Over 158-178 (SNFEQLVRGVWKPESNEFLKM) the chain is Cytoplasmic. A helical transmembrane segment spans residues 179–196 (SYPVKVTLIGAVLFTLQH). Over 197 to 204 (GHYLPISR) the chain is Lumenal. A helical transmembrane segment spans residues 205 to 225 (HNLMFIYTMFLVSIKVTMMLT). Topologically, residues 226–284 (HSAGSPFLPLETPLHRILFGLRQNQAEVRESPSSSGAKGKPSKKTLDKDSGEQSNKKDK) are cytoplasmic. The interval 250 to 284 (QAEVRESPSSSGAKGKPSKKTLDKDSGEQSNKKDK) is disordered. The span at 269-284 (KTLDKDSGEQSNKKDK) shows a compositional bias: basic and acidic residues.

This sequence belongs to the TMEM38 family. Homotrimer; conformation seems to be controled by binding to diacylglycerol (DAG).

It is found in the endoplasmic reticulum membrane. The enzyme catalyses K(+)(in) = K(+)(out). Channel activity is activated by increased cytosolic Ca(2+) levels and blocked by luminal high Ca(2+) levels. Intracellular monovalent cation channel required for maintenance of rapid intracellular calcium release. Acts as a potassium counter-ion channel that functions in synchronization with calcium release from intracellular stores. Activated by increased cytosolic Ca(2+) levels. The protein is Trimeric intracellular cation channel type B-B (tmem38b-b) of Xenopus laevis (African clawed frog).